A 310-amino-acid polypeptide reads, in one-letter code: O-acetylserine sulfhydrylase (310 aa).

Lysine 44 bears the N6-(pyridoxal phosphate)lysine mark. Pyridoxal 5'-phosphate is bound by residues asparagine 74, 178 to 182 (GTGGT), and serine 266.

The protein belongs to the cysteine synthase/cystathionine beta-synthase family. Homodimer. The cofactor is pyridoxal 5'-phosphate.

It catalyses the reaction O-acetyl-L-serine + hydrogen sulfide = L-cysteine + acetate. The protein operates within amino-acid biosynthesis; L-cysteine biosynthesis; L-cysteine from L-serine: step 2/2. Its function is as follows. Catalyzes the conversion of O-acetylserine (OAS) to cysteine through the elimination of acetate and addition of hydrogen sulfide. The polypeptide is O-acetylserine sulfhydrylase (cysK) (Mycobacterium bovis (strain ATCC BAA-935 / AF2122/97)).